Consider the following 217-residue polypeptide: Ribosome maturation factor RimP (217 aa).

The protein belongs to the RimP family.

Its subcellular location is the cytoplasm. Its function is as follows. Required for maturation of 30S ribosomal subunits. This Nocardia farcinica (strain IFM 10152) protein is Ribosome maturation factor RimP.